Reading from the N-terminus, the 74-residue chain is Antimicrobial peptide HsAp1 (74 aa).

An N-terminal signal peptide occupies residues 1–21; the sequence is MSRRVILTLVLVTILVKTMAG. A propeptide spanning residues 22–33 is cleaved from the precursor; it reads MESKKVETTDEI. Proline 65 bears the Proline amide mark. Positions 69–74 are excised as a propeptide; that stretch reads AISEQT.

It belongs to the non-disulfide-bridged peptide (NDBP) superfamily. Medium-length antimicrobial peptide (group 3) family. Expressed by the venom gland.

Its subcellular location is the secreted. It localises to the target cell membrane. Possesses antimicrobial activity against both Gram-negative (MIC=23.8-51.2 uM) and Gram-positive (MIC=11.8-46.5 uM) bacteria, as well as against the fungus C.tropicalis (MIC=48.6 uM). Also possesses a relatively high hemolytic activity. May act by disrupting the integrity of the bacterial cell membrane. In Heterometrus spinifer (Asia giant forest scorpion), this protein is Antimicrobial peptide HsAp1.